The primary structure comprises 578 residues: NADPH oxidase 4 (578 aa).

Over 1-16 (MAVSWRSWLANEGVKH) the chain is Cytoplasmic. The chain crosses the membrane as a helical span at residues 17–37 (LCLFIWLSMNVLLFWKTFLLY). Topologically, residues 38-62 (NQGPEYHYLHQMLGLGLCLSRASAS) are extracellular. The region spanning 58 to 303 (RASASVLNLN…YCAERLYRYI (246 aa)) is the Ferric oxidoreductase domain. A helical membrane pass occupies residues 63–83 (VLNLNCSLILLPMCRTLLAYL). At 84–103 (RGSQKVPSRRTRRLLDKSRT) the chain is on the cytoplasmic side. The chain crosses the membrane as a helical span at residues 104–124 (FHITCGVTICIFSGVHVAAHL). Over 125 to 154 (VNALNFSVNYSEDFVELNAARYRDEDPRKL) the chain is Extracellular. Asn-133 is a glycosylation site (N-linked (GlcNAc...) asparagine). The chain crosses the membrane as a helical span at residues 155-175 (LFTTVPGLTGVCMVVVLFLMI). At 176–188 (TASTYAIRVSNYD) the chain is on the cytoplasmic side. Residues 189 to 209 (IFWYTHNLFFVFYMLLTLHVS) traverse the membrane as a helical segment. Residues 210-424 (GGLLKYQTNL…SPFEESLNYE (215 aa)) lie on the Extracellular side of the membrane. An E-loop; essential for H2O2 generating catalytic activity region spans residues 218 to 273 (NLDTHPPGCISLNRTSSQNISLPEYFSEHFHEPFPEGFSKPEEFTQNTFVKICMEE). Asn-230 carries an N-linked (GlcNAc...) asparagine glycan. The mediates interaction with TLR4 stretch occupies residues 248 to 575 (HEPFPEGFSK…YGTRFEYNKE (328 aa)). In terms of domain architecture, FAD-binding FR-type spans 304-419 (RSNKPVTIIS…DGPFGSPFEE (116 aa)). Residues 425 to 445 (VSLCVAGGIGVTPFASILNTL) traverse the membrane as a helical segment. At 446-578 (LDDWKPYKLR…RFEYNKESFS (133 aa)) the chain is on the cytoplasmic side.

As to quaternary structure, interacts with, relocalizes and stabilizes CYBA/p22phox. Interacts with TLR4. Interacts with protein disulfide isomerase. Interacts with PPP1R15A. Interacts with LRRC8A; this interaction prevents the ubiquitin-mediated degradation of LRRC8A. Requires heme as cofactor. Post-translationally, N-glycosylation is required for the function.

It is found in the cytoplasm. Its subcellular location is the endoplasmic reticulum membrane. It localises to the cell membrane. The protein resides in the cell junction. The protein localises to the focal adhesion. It is found in the nucleus. It carries out the reaction NADPH + 2 O2 = 2 superoxide + NADP(+) + H(+). The enzyme catalyses NADPH + O2 + H(+) = H2O2 + NADP(+). Its activity is regulated as follows. Activated by insulin. Inhibited by diphenylene iodonium. Inhibited by plumbagin. Activated by phorbol 12-myristate 13-acetate (PMA). Functionally, NADPH oxidase that catalyzes predominantly the reduction of oxygen to H2O2. Can also catalyze to a smaller extent, the reduction of oxygen to superoxide. May function as an oxygen sensor regulating the KCNK3/TASK-1 potassium channel and HIF1A activity. May regulate insulin signaling cascade. May play a role in apoptosis, bone resorption and lipolysaccharide-mediated activation of NFKB. May produce superoxide in the nucleus and play a role in regulating gene expression upon cell stimulation. Promotes ferroptosis, reactive oxygen species production and reduced glutathione (GSH) levels by activating NLRP3 inflammasome activation and cytokine release. This chain is NADPH oxidase 4 (NOX4), found in Pongo abelii (Sumatran orangutan).